We begin with the raw amino-acid sequence, 400 residues long: Small ribosomal subunit protein bS1 (400 aa).

S1 motif domains lie at 17 to 87, 107 to 173, 194 to 262, and 279 to 348; these read GDVV…VTYL, EEVV…LSRR, GDVV…LSLK, and GDVV…LSIK. Positions 351–366 are enriched in basic and acidic residues; it reads EERPAQEEGQKEEKRA. The tract at residues 351 to 400 is disordered; the sequence is EERPAQEEGQKEEKRAARPRRPRRQEKRDFELPETQTGFSMADLFGDIEL.

Belongs to the bacterial ribosomal protein bS1 family. Post-translationally, phosphorylated.

Its function is as follows. Binds mRNA; thus facilitating recognition of the initiation point. It is needed to translate mRNA with a short Shine-Dalgarno (SD) purine-rich sequence. In Streptococcus pneumoniae (strain ATCC BAA-255 / R6), this protein is Small ribosomal subunit protein bS1 (rpsA).